The chain runs to 359 residues: N-acetyl-gamma-glutamyl-phosphate reductase (359 aa).

Cysteine 162 is an active-site residue.

This sequence belongs to the NAGSA dehydrogenase family. Type 1 subfamily.

The protein resides in the cytoplasm. The enzyme catalyses N-acetyl-L-glutamate 5-semialdehyde + phosphate + NADP(+) = N-acetyl-L-glutamyl 5-phosphate + NADPH + H(+). It functions in the pathway amino-acid biosynthesis; L-arginine biosynthesis; N(2)-acetyl-L-ornithine from L-glutamate: step 3/4. In terms of biological role, catalyzes the NADPH-dependent reduction of N-acetyl-5-glutamyl phosphate to yield N-acetyl-L-glutamate 5-semialdehyde. The protein is N-acetyl-gamma-glutamyl-phosphate reductase of Prochlorococcus marinus (strain NATL1A).